The following is a 435-amino-acid chain: Phospholipase A1 EG1, chloroplastic/mitochondrial (435 aa).

The transit peptide at Met-1–Gly-31 directs the protein to the chloroplast and mitochondrion. A GXSXG motif is present at residues Gly-264 to Gly-268. The active-site Acyl-ester intermediate is the Ser-266. Catalysis depends on charge relay system residues Asp-324 and His-371.

It belongs to the AB hydrolase superfamily. Lipase family.

Its subcellular location is the mitochondrion. It is found in the plastid. The protein localises to the chloroplast. The catalysed reaction is a 1,2-diacyl-sn-glycero-3-phosphocholine + H2O = a 2-acyl-sn-glycero-3-phosphocholine + a fatty acid + H(+). Its function is as follows. Phospholipase that releases free fatty acids from phospholipids. Catalyzes the initial step of jasmonate (JA) biosynthesis. Required for the biosynthesis of endogenous JA in seedling, inflorescence and spikelets. Not essential for JA biosynthesis after wounding. Mediates spikelet development and specification of empty-glume identity. Functions in a high temperature-dependent manner to maintain floral developmental robustness under heat stress conditions. Functions by safeguarding the expression of several floral identity genes, such as MADS1, MADS6 and G1. In Oryza sativa subsp. indica (Rice), this protein is Phospholipase A1 EG1, chloroplastic/mitochondrial.